We begin with the raw amino-acid sequence, 271 residues long: MSPERRIEGLALKVGPLGEHDRLLTLLSDDVGLIRLAVPGARKPRSSLAAAVPLTTMELQVGGRSGLLRVRQLRVQHNFGNVGQRLETLAAAQALSELSISLVAGDDPVPGMLSAVLMHLERLELLAQKQRSSEMKSAEGERVDRTLATLVQACVHLLALGGYGLPLQTCCRSGAALSPPIGNWEWRCSLLADEGLAIGSQAGAAIQINPSELALLQRLTRLELPERQDGGLMGPRPVWLRLFTLLESWCRVHLPRPVRSFAMVREAVANA.

The protein belongs to the RecO family.

Involved in DNA repair and RecF pathway recombination. The chain is DNA repair protein RecO from Synechococcus sp. (strain CC9311).